We begin with the raw amino-acid sequence, 200 residues long: 3-isopropylmalate dehydratase small subunit (200 aa).

It belongs to the LeuD family. LeuD type 1 subfamily. Heterodimer of LeuC and LeuD.

The catalysed reaction is (2R,3S)-3-isopropylmalate = (2S)-2-isopropylmalate. It functions in the pathway amino-acid biosynthesis; L-leucine biosynthesis; L-leucine from 3-methyl-2-oxobutanoate: step 2/4. Functionally, catalyzes the isomerization between 2-isopropylmalate and 3-isopropylmalate, via the formation of 2-isopropylmaleate. This chain is 3-isopropylmalate dehydratase small subunit (leuD), found in Haemophilus influenzae (strain ATCC 51907 / DSM 11121 / KW20 / Rd).